The sequence spans 354 residues: Homeobox protein Nkx-2.4 (354 aa).

The segment at residues 188–247 is a DNA-binding region (homeobox); sequence RRKRRVLFSQAQVYELERRFKQQKYLSAPEREHLASMIHLTPTQVKIWFQNHRYKMKRQA. The interval 245-329 is disordered; it reads RQAKDKAAQQ…PALHGPGGGL (85 aa). The span at 262–272 shows a compositional bias: pro residues; the sequence is GPPPPPPPPSP. Residues 290-304 show a composition bias toward low complexity; sequence GAGTPTPGQGGQQPQ.

It belongs to the NK-2 homeobox family. As to expression, in the embryo it is detected in the posterior hypothalamus and later in the head. In the adult it is detected only in testis.

The protein localises to the nucleus. Its function is as follows. Probable transcription factor. The sequence is that of Homeobox protein Nkx-2.4 (Nkx2-4) from Mus musculus (Mouse).